Here is a 355-residue protein sequence, read N- to C-terminus: Guanine nucleotide-binding protein subunit alpha-14 (355 aa).

Positions 34 to 355 (RELKLLLLGT…QLNLREFNLV (322 aa)) constitute a G-alpha domain. The tract at residues 37 to 50 (KLLLLGTGESGKST) is G1 motif. Residues 42-49 (GTGESGKS), 176-182 (LRVRVPT), 201-205 (DVGGQ), 270-273 (NKKD), and alanine 327 contribute to the GTP site. Serine 49 lines the Mg(2+) pocket. The tract at residues 174-182 (DVLRVRVPT) is G2 motif. Residue arginine 179 is modified to ADP-ribosylarginine; by cholera toxin. Threonine 182 is a Mg(2+) binding site. A G3 motif region spans residues 197 to 206 (FRMVDVGGQR). The segment at 266–273 (ILFLNKKD) is G4 motif. The interval 325 to 330 (TCATDT) is G5 motif.

It belongs to the G-alpha family. G(q) subfamily. As to quaternary structure, g proteins are composed of 3 units; alpha, beta and gamma. The alpha chain contains the guanine nucleotide binding site.

Guanine nucleotide-binding proteins (G proteins) are involved as modulators or transducers in various transmembrane signaling systems. This is Guanine nucleotide-binding protein subunit alpha-14 (GNA14) from Homo sapiens (Human).